Consider the following 633-residue polypeptide: GRAM domain-containing protein 4 (633 aa).

Disordered regions lie at residues 1–46, 72–109, and 182–216; these read MGIA…VRPR, LAESPNASDTECGDEIPLKTPRPSPRDSEELRDPAGPG, and VLKARSEEQPAQPQQPPKGQSQASNGTGTERRSQG. The segment covering 27-39 has biased composition (basic and acidic residues); the sequence is PWDKGLSGREPPR. Residues serine 75 and serine 79 each carry the phosphoserine modification. The span at 95-104 shows a compositional bias: basic and acidic residues; the sequence is SPRDSEELRD. The stretch at 134-190 forms a coiled coil; the sequence is HLEIALLEKHFLQEELRKLREETNSEMLRQELDRERQRRIELEQKMQEVLKARSEEQ. Over residues 190 to 205 the composition is skewed to low complexity; that stretch reads QPAQPQQPPKGQSQAS. The next 3 membrane-spanning stretches (helical) occupy residues 295–315, 389–409, and 411–431; these read VYMNAVWHGWAIPMFLFLAIL, TTQKLYVALWAAFLASCFFPY, and LVGLAVGLYAGIKFFLIDFIF. The region spanning 500 to 578 is the GRAM domain; that stretch reads GNFHEIFNLT…MDITDIQKYK (79 aa).

Interacts with RTN4 (isoform B).

Its subcellular location is the mitochondrion membrane. It localises to the endoplasmic reticulum membrane. Plays a role as a mediator of E2F1-induced apoptosis in the absence of p53/TP53. Inhibits TLR9 response to nucelic acids and regulates TLR9-mediated innate immune response. The protein is GRAM domain-containing protein 4 of Mus musculus (Mouse).